Consider the following 393-residue polypeptide: MEGRGPLATSPRRRWLLLLLLLPHSHQRIQDPPAVHLSSASGQGPVTIMTFDFTKMRKTSSSFELRTWDPEGVILYGDTDPHEDWFMLGLRGGRPEIQIHNHVARLTVGAGPRLDDGKWHQVEVKVLGDLLLLTVDGEEVLCLKQVFGPLASRPQPVVRIAVGGLPFPPSSLRLPLVPALDGCVRRGSWLDHQAQTSVSALSGSPRSCGVESQPGSFFPPGAHAEFSLQDLPQPHAEPWAFSLDLGLQLAAGSGHLLALGTPENPPRLSLQLQDQKVVLSSAWGPQLHLPLVLGAPLQLKLAASGVTLSQGPETEILALPLSDPGSLLNLWVQPHARLFLGALPGEAASASFCLDGLWAQGQKLDMDRALNRSQNIWTHSCPQSLGNDTDTTH.

The first 27 residues, 1–27 (MEGRGPLATSPRRRWLLLLLLLPHSHQ), serve as a signal peptide directing secretion. 2 Laminin G-like domains span residues 35 to 208 (VHLS…PRSC) and 215 to 381 (GSFF…THSC). 2 disulfide bridges follow: Cys-183–Cys-208 and Cys-353–Cys-381. Asn-371 and Asn-387 each carry an N-linked (GlcNAc...) asparagine glycan.

Homodimer.

Its subcellular location is the secreted. Functions as an androgen transport protein, but may also be involved in receptor mediated processes. Each dimer binds one molecule of steroid. Specific for 5-alpha-dihydrotestosterone, testosterone, and 17-beta-estradiol. Regulates the plasma metabolic clearance rate of steroid hormones by controlling their plasma concentration. The chain is Sex hormone-binding globulin (SHBG) from Crocuta crocuta (Spotted hyena).